Here is a 323-residue protein sequence, read N- to C-terminus: UDP-N-acetylenolpyruvoylglucosamine reductase (323 aa).

One can recognise an FAD-binding PCMH-type domain in the interval 33–214 (IGGPAEALFC…LSAVFTLTHG (182 aa)). Residue Ser-243 is the Proton donor of the active site. Residue Glu-315 is part of the active site.

This sequence belongs to the MurB family. Requires FAD as cofactor.

It localises to the cytoplasm. It catalyses the reaction UDP-N-acetyl-alpha-D-muramate + NADP(+) = UDP-N-acetyl-3-O-(1-carboxyvinyl)-alpha-D-glucosamine + NADPH + H(+). It participates in cell wall biogenesis; peptidoglycan biosynthesis. Functionally, cell wall formation. In Treponema denticola (strain ATCC 35405 / DSM 14222 / CIP 103919 / JCM 8153 / KCTC 15104), this protein is UDP-N-acetylenolpyruvoylglucosamine reductase.